Here is a 798-residue protein sequence, read N- to C-terminus: MEDIGNNNFEIIDDKSDEKNDENFEDKNSRNNINEEQILSNQQQQQQQQQQQQQQQQQQQQQQQQQQQQQQEQQQFKNEVINTLHPKQPNNEYSLSSLSLSPQTPQINLSEKLISDNSNLNSNSNNNNKDIESGIQTKIKNIENRRNSINSDSSGTFNNEITNGRSNDNEIININNNVGVQVTFENICYKVLNKKYNEQKKIIKKLESGKIDIEDIESQVNKLPIDRIIEKELTILSNVSGIVEKGEMVALMGPSGSGKSTLLDILANRKSTGTITGKILVNGKEIGEAYKMFCSYVTQEEVFLETSTVYETLKFHADLRLPDMTDTEKDIRIKQVLKDVGLDRKLNSKIGGILPGGMIVKGLSGGEKKRVSIGCALVTNPSLLFLDEPTSGLDSLNSLKVMKVLLELTKMKGVTVVCSVHQPRPEIFYLFSNIMVVLKGRMVYSGSNILEYLSSIDSNYKCPPQMNPADFILDVCDEIVNNPSQYSTTVDTWEKYWKHEIQPTISNDPINIDIPKRVGFIYQYWVCQKRSYQSFVRNRVVFFSKIVIAILIGLLFSACFGTVGYDGLDQNEAQSVSALFFFIITSLNLLPYSSISTFVSIRTLFNSERASKIYHPFPYFIGSMLIEIVSSFFVVLIITTIIYCIVHLRWSFEAYILSLISFYMVFLASVFMVIAMSNIAGTVDLTFSYCTGVSVVLVLFSGFLVPINSLPDSFGWIHHIDYLFYGFSSIVIIQYRDFEFQCPQPPIPCLYSNGNNLIEFLGLKNWEYNKSIGILTIWIAFFYILAYIGLYKFNKEKR.

Residues 1–51 are disordered; the sequence is MEDIGNNNFEIIDDKSDEKNDENFEDKNSRNNINEEQILSNQQQQQQQQQQ. Residues 12-29 show a composition bias toward basic and acidic residues; that stretch reads IDDKSDEKNDENFEDKNS. Over residues 30-41 the composition is skewed to polar residues; that stretch reads RNNINEEQILSN. Residues 34–83 are a coiled coil; sequence NEEQILSNQQQQQQQQQQQQQQQQQQQQQQQQQQQQQQEQQQFKNEVINT. Residues 42–51 show a composition bias toward low complexity; that stretch reads QQQQQQQQQQ. The 254-residue stretch at 211 to 464 folds into the ABC transporter domain; the sequence is IDIEDIESQV…SIDSNYKCPP (254 aa). 253–260 contributes to the ATP binding site; it reads GPSGSGKS. A run of 7 helical transmembrane segments spans residues 540 to 560, 579 to 599, 628 to 648, 656 to 676, 687 to 707, 713 to 733, and 771 to 791; these read VVFFSKIVIAILIGLLFSACF, LFFFIITSLNLLPYSSISTFV, IVSSFFVVLIITTIIYCIVHL, ILSLISFYMVFLASVFMVIAM, FSYCTGVSVVLVLFSGFLVPI, SFGWIHHIDYLFYGFSSIVII, and SIGILTIWIAFFYILAYIGLY. The ABC transmembrane type-2 domain maps to 540 to 793; sequence VVFFSKIVIA…ILAYIGLYKF (254 aa).

The protein belongs to the ABC transporter superfamily. ABCG family. Eye pigment precursor importer (TC 3.A.1.204) subfamily.

Its subcellular location is the membrane. The polypeptide is ABC transporter G family member 4 (abcG4) (Dictyostelium discoideum (Social amoeba)).